A 546-amino-acid polypeptide reads, in one-letter code: Chaperonin GroEL (546 aa).

Residues 29 to 32, lysine 50, 86 to 90, glycine 414, and aspartate 492 contribute to the ATP site; these read TMGP and DGTTT.

The protein belongs to the chaperonin (HSP60) family. In terms of assembly, forms a cylinder of 14 subunits composed of two heptameric rings stacked back-to-back. Interacts with the co-chaperonin GroES.

Its subcellular location is the cytoplasm. The enzyme catalyses ATP + H2O + a folded polypeptide = ADP + phosphate + an unfolded polypeptide.. Functionally, together with its co-chaperonin GroES, plays an essential role in assisting protein folding. The GroEL-GroES system forms a nano-cage that allows encapsulation of the non-native substrate proteins and provides a physical environment optimized to promote and accelerate protein folding. This Helicobacter pylori (strain HPAG1) protein is Chaperonin GroEL.